We begin with the raw amino-acid sequence, 503 residues long: Maturase K (503 aa).

The protein belongs to the intron maturase 2 family. MatK subfamily.

It localises to the plastid. The protein resides in the chloroplast. In terms of biological role, usually encoded in the trnK tRNA gene intron. Probably assists in splicing its own and other chloroplast group II introns. The polypeptide is Maturase K (Rosa acicularis (Prickly rose)).